Consider the following 413-residue polypeptide: Serine hydroxymethyltransferase (413 aa).

(6S)-5,6,7,8-tetrahydrofolate contacts are provided by residues Leu119 and 123–125 (GHL). Lys228 is subject to N6-(pyridoxal phosphate)lysine. 351–353 (SPF) contributes to the (6S)-5,6,7,8-tetrahydrofolate binding site.

This sequence belongs to the SHMT family. Homodimer. It depends on pyridoxal 5'-phosphate as a cofactor.

It is found in the cytoplasm. The catalysed reaction is (6R)-5,10-methylene-5,6,7,8-tetrahydrofolate + glycine + H2O = (6S)-5,6,7,8-tetrahydrofolate + L-serine. It functions in the pathway one-carbon metabolism; tetrahydrofolate interconversion. It participates in amino-acid biosynthesis; glycine biosynthesis; glycine from L-serine: step 1/1. Its function is as follows. Catalyzes the reversible interconversion of serine and glycine with tetrahydrofolate (THF) serving as the one-carbon carrier. This reaction serves as the major source of one-carbon groups required for the biosynthesis of purines, thymidylate, methionine, and other important biomolecules. Also exhibits THF-independent aldolase activity toward beta-hydroxyamino acids, producing glycine and aldehydes, via a retro-aldol mechanism. This Clostridium botulinum (strain 657 / Type Ba4) protein is Serine hydroxymethyltransferase.